The sequence spans 71 residues: MGLSDKINSKSDEAVGAAKEKIGGLTDDSDLKSAGADQKASGKVAQKVEDVKDKANDLKHNVQAAADKLKG.

The disordered stretch occupies residues 20–46 (EKIGGLTDDSDLKSAGADQKASGKVAQ).

Belongs to the UPF0337 (CsbD) family.

The protein is UPF0337 protein PPA1427 of Cutibacterium acnes (strain DSM 16379 / KPA171202) (Propionibacterium acnes).